A 628-amino-acid polypeptide reads, in one-letter code: MWLPVYVPLLLVFGVSLSLPQGSLGTDSSSLRGVDADTEKRINVGKKHLQTLRNLETRCHDSLQALVVIDAGSSSTRTNVFLAKTRSCPNKGRSIDPDSIQLIGAGKRFAGLRVVLEEWLDTYAGKDWESRPVDARLLFQYVPQMHEGAKKLMQLLEEDTVAILDSQLNEKQKVQVKALGIPVMLCSTAGVRDFHEWYRDALFVLLRHLINNPSPAHGYKFFTNPFWTRPITGAEEGLFAFITLNHLSRRLGEDPARCMIDEYGVKQCRNDLAGVVEVGGASAQIVFPLQEGTVLPSSVRAVNLQRERLLPERYPSADVVSVSFMQLGMASSAGLFLKELCSNDEFLQGGICSNPCLFKGFQQSCSAGEVEVRPDGSASVNEDVRKNRLKPLATYCSVNNPEISFKVTNEMQCRENSIDPTKPLAERMKIENCSIIKGTGNFDKCVSQVESILVAPKLPLPANIEAASSGFESVDQVFRFASSTAPMIVTGGGMLAAINTLKDHRLLRSDFSGDVEELAEAAREFCSSEVIIRTDGPVIQLPNARGEQKLNSLNFDLCKTMALTVSLLRHMAAGENQPSFIKWEKSIAGPDGKPLADLGWQVGVILHHVLFTEEWGRNAYEAGYSHNL.

The signal sequence occupies residues 1–25 (MWLPVYVPLLLVFGVSLSLPQGSLG). The active-site Proton acceptor is glutamate 236. Asparagine 432 is a glycosylation site (N-linked (GlcNAc...) asparagine).

Belongs to the GDA1/CD39 NTPase family. As to quaternary structure, homotetramer.

It localises to the secreted. The protein resides in the parasitophorous vacuole. The catalysed reaction is a ribonucleoside 5'-triphosphate + H2O = a ribonucleoside 5'-diphosphate + phosphate + H(+). Functionally, may perform an important processing step in the conversion of high energy nucleotides prior to uptake by the parasite and may contribute to intracellular survival and virulence. NTPAse-I has a specific activity 4.5-fold higher than NTPAse-II in hydrolysis of ATP. The primary difference between these isozymes lies in their ability to hydrolyze nucleoside triphosphate versus diphosphate substrates. While NTPAse-II hydrolyzes ATP to ADP and ADP to AMP at almost the same rate, NTPAse-I hydrolyzes ADP to AMP at a much slower rate (0.7% of the rate for ATP). This Toxoplasma gondii protein is Nucleoside-triphosphatase 1 (NTP3).